Reading from the N-terminus, the 258-residue chain is MNSIDPRAIIDPSAKLADGVEVGPWSIVGPDVEIGEGTVIGPHVVLKGPTRIGKHNRIFQFSSIGEDTPDLKYKGEPTRLVIGDHNVIREGVTIHRGTVQDRAETTVGDHNLIMAYAHIGHDSVIGNHCILVNNTALAGHVHVGDWAILSGYTLVHQYCHIGAHAFSGMGTAIGKDVPAFVTVFGSPAEARSMNFEGMRRRGFSDEVIHVLRRCYKIVYRQGLTVEDALKELAEPAAQHPEVELFRQSIVSSARGITR.

Belongs to the transferase hexapeptide repeat family. LpxA subfamily. Homotrimer.

It is found in the cytoplasm. The enzyme catalyses a (3R)-hydroxyacyl-[ACP] + UDP-N-acetyl-alpha-D-glucosamine = a UDP-3-O-[(3R)-3-hydroxyacyl]-N-acetyl-alpha-D-glucosamine + holo-[ACP]. Its pathway is glycolipid biosynthesis; lipid IV(A) biosynthesis; lipid IV(A) from (3R)-3-hydroxytetradecanoyl-[acyl-carrier-protein] and UDP-N-acetyl-alpha-D-glucosamine: step 1/6. Functionally, involved in the biosynthesis of lipid A, a phosphorylated glycolipid that anchors the lipopolysaccharide to the outer membrane of the cell. This Pseudomonas putida (strain GB-1) protein is Acyl-[acyl-carrier-protein]--UDP-N-acetylglucosamine O-acyltransferase.